Consider the following 328-residue polypeptide: Endo-beta-1,4-glucanase B (328 aa).

The N-terminal stretch at 1–17 is a signal peptide; sequence MKVNTLLVAVAAGTAMA. Residue N95 is glycosylated (N-linked (GlcNAc...) asparagine). E155 acts as the Proton donor in catalysis. E262 functions as the Nucleophile in the catalytic mechanism.

It belongs to the glycosyl hydrolase 5 (cellulase A) family.

The protein localises to the secreted. The catalysed reaction is Endohydrolysis of (1-&gt;4)-beta-D-glucosidic linkages in cellulose, lichenin and cereal beta-D-glucans.. In terms of biological role, has endoglucanase activity on substrates containing beta-1,4 glycosidic bonds, like in carboxymethylcellulose (CMC), hydroxyethylcellulose (HEC) and beta-glucan. Involved in the degradation of complex natural cellulosic substrates. The polypeptide is Endo-beta-1,4-glucanase B (eglB) (Emericella nidulans (strain FGSC A4 / ATCC 38163 / CBS 112.46 / NRRL 194 / M139) (Aspergillus nidulans)).